Here is a 269-residue protein sequence, read N- to C-terminus: 4-hydroxy-tetrahydrodipicolinate reductase (269 aa).

NAD(+) is bound by residues 8 to 13 (GAGGRM) and glutamate 34. Arginine 35 is a binding site for NADP(+). Residues 98–100 (GTT) and 122–125 (ASNY) each bind NAD(+). Catalysis depends on histidine 155, which acts as the Proton donor/acceptor. A (S)-2,3,4,5-tetrahydrodipicolinate-binding site is contributed by histidine 156. Lysine 159 acts as the Proton donor in catalysis. 165–166 (GT) provides a ligand contact to (S)-2,3,4,5-tetrahydrodipicolinate.

Belongs to the DapB family.

The protein resides in the cytoplasm. The catalysed reaction is (S)-2,3,4,5-tetrahydrodipicolinate + NAD(+) + H2O = (2S,4S)-4-hydroxy-2,3,4,5-tetrahydrodipicolinate + NADH + H(+). The enzyme catalyses (S)-2,3,4,5-tetrahydrodipicolinate + NADP(+) + H2O = (2S,4S)-4-hydroxy-2,3,4,5-tetrahydrodipicolinate + NADPH + H(+). It participates in amino-acid biosynthesis; L-lysine biosynthesis via DAP pathway; (S)-tetrahydrodipicolinate from L-aspartate: step 4/4. In terms of biological role, catalyzes the conversion of 4-hydroxy-tetrahydrodipicolinate (HTPA) to tetrahydrodipicolinate. The protein is 4-hydroxy-tetrahydrodipicolinate reductase of Haemophilus ducreyi (strain 35000HP / ATCC 700724).